The following is a 648-amino-acid chain: Dystrotelin (648 aa).

The segment at 223–279 (QHRVHCHACKAFPITGLRYRCLKCLNVHLCQSCFLTERRSRKHKPSHSVLEYCTQPS) adopts a ZZ-type zinc-finger fold. Residues Cys228, Cys231, Cys243, Cys246, Cys252, Cys255, His265, and His269 each coordinate Zn(2+). Residues 367-446 (QRETAELQKD…LDTVRHLLSL (80 aa)) adopt a coiled-coil conformation. A compositionally biased stretch (polar residues) spans 455-474 (SHSNLQLEQDGSINENNWTQ). 2 disordered regions span residues 455 to 509 (SHSN…DTLY) and 536 to 557 (QREEEELQEEEEGLHEKEEGLP). Residues 479-502 (KPHESSSTEHEVEERGTRQERRFE) show a composition bias toward basic and acidic residues. Residues 538 to 548 (EEEELQEEEEG) show a composition bias toward acidic residues.

It is found in the cell membrane. The chain is Dystrotelin (dytn) from Danio rerio (Zebrafish).